Consider the following 125-residue polypeptide: Profilin-P (125 aa).

N-acetylserine is present on Ser2.

Belongs to the profilin family. As to quaternary structure, occurs in many kinds of cells as a complex with monomeric actin in a 1:1 ratio.

It localises to the cytoplasm. The protein localises to the cytoskeleton. Functionally, binds to actin and affects the structure of the cytoskeleton. At high concentrations, profilin prevents the polymerization of actin, whereas it enhances it at low concentrations. By binding to PIP2, it inhibits the formation of IP3 and DG. The chain is Profilin-P (PROP) from Physarum polycephalum (Slime mold).